A 508-amino-acid polypeptide reads, in one-letter code: Probable zinc metalloprotease MCYG_04217 (508 aa).

N-linked (GlcNAc...) asparagine glycosylation is present at Asn111. Zn(2+) is bound by residues His182, Asp202, and Glu238. N-linked (GlcNAc...) asparagine glycosylation occurs at Asn253. Asp265 is a Zn(2+) binding site. Residues 422-508 enclose the Fibronectin type-III domain; the sequence is MPRNVRVDTS…ERGVAVLPFP (87 aa). A glycan (N-linked (GlcNAc...) asparagine) is linked at Asn435.

This sequence belongs to the peptidase M28 family. M28B subfamily. It depends on Zn(2+) as a cofactor.

Its subcellular location is the secreted. The polypeptide is Probable zinc metalloprotease MCYG_04217 (Arthroderma otae (strain ATCC MYA-4605 / CBS 113480) (Microsporum canis)).